The chain runs to 521 residues: Histidine--tRNA ligase (521 aa).

L-histidine is bound by residues 137 to 139, Arg-164, Gln-180, Asp-184, Arg-338, and 342 to 343; these read DLT and YY.

It belongs to the class-II aminoacyl-tRNA synthetase family.

It carries out the reaction tRNA(His) + L-histidine + ATP = L-histidyl-tRNA(His) + AMP + diphosphate + H(+). Functionally, involved in protein synthesis. Catalyzes the specific attachment of an amino acid to its cognate tRNA in a 2 step reaction: the amino acid (AA) is first activated by ATP to form AA-AMP and then transferred to the acceptor end of the tRNA. Required for germ cell development. This chain is Histidine--tRNA ligase, found in Caenorhabditis elegans.